We begin with the raw amino-acid sequence, 2135 residues long: MPSVVALDLCQLFDRSVARTPHQLAVDHESGSLTYTELDVASSNLARKLKQEGVVPGEAVLLLTEHGTRNVVALLAILKAHACYVPLDRSSWSSERIQAVLDGTDSRILINTTVEPFESPRHKVIHLTSADVTTLSTDRSTTKVIPDIAPEDLACLIFTSGSTGVPKGVMIPHRAVANYAQTSPFNMDVQPGDRVLHILSVSFDASTGMLFSILGNSGIVVPATMDTLFDKAQSCSILASTPSILATLPLPTALPDSYPYVHTILLGGESPPAPLLSSWLQFGVRILNAYGPTETTCASLMQEVEVCQETGMINRSIIGRPMPNGPVYLLQPDTLLPVEEEGEEGEIAIAGVGLAHGYYRNAALTAEKFIEWHGKRVYRTGDQGRWTRRNDGQRVVEFRGRSDRTVKNRGFLVNLPADVEEPLRQMGFGVTDVYASLINGLLVALVTPATADLDGLQSEADRRLSSFHRPGRYLAVDQFPLSANGKIDTKAIENMLKEYQARLCEGTDDEETTGGERPTEREQVIAECMYTALGLDLPSASASKDFNFFAMGGNSLAALRFTSLCRERGILLTTRDLYLHPTVRGILPYARDLAHSGLPLPDKEEQIDHRLSLKAEVAAALHLLGDIDVAPLTPLQLQLSAPIFQSDGTNTNQLRQSYPLASAEHICNAWRQVVLSEPVFRTQIALDIGPGVQIVHAQPRCQPQEITFHRREDYNAALSDPSRLPVGLGMRLEFMKFMPNDDDDDEGEVTVVWTAHHSLIDGYSLGLILARVQQASQGVASSRVSSFVDAAWNLLSVQKQRDTEARRFWEQYLQPVRSLTKAEATTTPVARPYLAQEVLFKHVGGVDELHRLASSCSVTLAAVYYTAWAMTIARTTKSTLVTLGVVFSGREILPDDAQAVGPLMATLPLVCRIDGEASIERQLQTTFEGLATISTYAWSAPDQIGYRVDSLLATQYDFPTYDQPIPPQKEQFFENTTFALSLLVEADARFRLVYNPSVHGEQTVQQYADTFQQALQALVGDSTMEAWLTGPTKAPLAVDQASDIQHVNVPNVASAFYASVDLHKDLIAVDGPGGTLPYRELDQKSNAVASHIAKHFSRAQVIAIHADGTLNWVVGILGILKAGCAYCPLDPAYPIARRVAVYEQSGASALLIPNACSSSAALLPITDLRVFTIQETETSDTSRQPSLLANANEDALIVFTSGTTGRPKGVPISHRGLLALQSNPEATMFSRPGRRIAQFMSPAFDYCANEIFSALLHGGTLVLRDPSDPLAHLAKVDVSTITPSVLSVLNPDDYPNLDMVYATGEPVTPGLLARWGEGRAFYNAYGPAECSICTSFTRLEPGQQVTIGNAVRTARMYILDPDLQPVSDGQTGEIFLAGQQVMRGYVGDDAKTAYSVLPDPWHPGERMYRTGDYGYWNADRQIVYIGRLDRQVKIRGFRVELAAVEQKMYQEEPRLTQAAALVVNDTLVAFVMPLDVDVSRLEQRLRESLQPSWVPQVITALEEFPWTANRKVDYRKLAERATLTRPEDSLPQQKTPAGMTAKDASIADGIATLWKNVLRLQAGGGSRKLCEDDDFRALGGHSVLQMMLAARLGSTFGISVSMRDVIEHSTLAEQVELVRRKRQASTAKPRTICDAFPDHCLSPLERQTWFQYLIAADVRTFNIPVLLHLGGTFDRDRLVQSFNAVLASRKIFRTNFVETSLGPCRIFRDTPPRVLVCDGALDTTKEIDRSFDLARDELIRVFLDRRTLLVVTSHAVADLNSVQNLLQDVSGVYAGRTTPTPDRWHYPRAPAWSRQATEQERKFWSKYLEGAPQRLDIPRYPGQMAFEGRSRVSEFKGDLVRRAVTLGQEHGLSQHQLVCAAVAQTLQWLAGSNDVVLGSPWANRGHTVEQESMGLFLDRLPLRFKTPVNADCATILQSTRAASQAAVCNSIPFEQVLNLLHLPRTIRQHPLFEAMVTFHLKGAVEDCLAIEGLEVKREMCFASGAKFLLMFEWTEIEADHWTLRIEYDDHQLDDATVTTIEDSIRCVLEGLADRLSRAAIHERLNAMHKTARTKVDWNFYRRLVGILQREMATCLGVSLDEFPCSVSFFEAGGDSIQAWRLSRQLKRVGLEVPICNIFDHPTAQDLAQRLYRQVL.

Residues 34-424 (TYTELDVASS…LPADVEEPLR (391 aa)) are adenylation 1. The 76-residue stretch at 519–594 (TEREQVIAEC…GILPYARDLA (76 aa)) folds into the Carrier 1 domain. O-(pantetheine 4'-phosphoryl)serine is present on Ser-555. The condensation 1 stretch occupies residues 663–913 (AEHICNAWRQ…MATLPLVCRI (251 aa)). The adenylation 2 stretch occupies residues 1078 to 1458 (YRELDQKSNA…YQEEPRLTQA (381 aa)). Positions 1544–1622 (ASIADGIATL…EQVELVRRKR (79 aa)) constitute a Carrier 2 domain. Ser-1582 is subject to O-(pantetheine 4'-phosphoryl)serine. Residues 1642–1905 (SPLERQTWFQ…FLDRLPLRFK (264 aa)) form a condensation 2 region. The Carrier 3 domain maps to 2061 to 2134 (RRLVGILQRE…DLAQRLYRQV (74 aa)). Ser-2095 is modified (O-(pantetheine 4'-phosphoryl)serine).

The protein belongs to the NRP synthetase family.

Its pathway is mycotoxin biosynthesis. Nonribosomal peptide synthetase; part of the gene cluster that mediates the biosynthesis of gliotoxin, a member of the epipolythiodioxopiperazine (ETP) class of toxins characterized by a disulfide-bridged cyclic dipeptide. The first step in gliotoxin biosynthesis is the condensation of serine and phenylalanine to form the cyclo-L-phenylalanyl-L-serine diketopiperazine (DKP) by the NRPS gliP. GliP is also able to produce the DKP cyclo-L-tryptophanyl-L-serine, suggesting that the substrate specificity of the first adenylation (A) domain in gliP is sufficiently relaxed to accommodate both L-Phe and L-Trp. The cytochrome P450 monooxygenase gliC has been shown to catalyze the subsequent hydroxylation of the alpha-carbon of L-Phe in cyclo-L-phenylalanyl-L-serine whereas the second cytochrome P450 enzyme, gliF, is presumably involved in the modification of the DKP side chain. The glutathione S-transferase (GST) gliG then forms a bis-glutathionylated biosynthetic intermediate which is responsible for the sulfurization of gliotoxin. This bis-glutathionylated intermediate is subsequently processed by the gamma-glutamyl cyclotransferase gliK to remove both gamma-glutamyl moieties. Subsequent processing via gliI yields a biosynthetic intermediate, which is N-methylated via the N-methyltransferase gliN, before the gliotoxin oxidoreductase gliT-mediated disulfide bridge closure. GliN-mediated amide methylation confers stability to ETP, damping the spontaneous formation of tri- and tetrasulfides. Intracellular dithiol gliotoxin oxidized by gliT is subsequently effluxed by gliA. Gliotoxin contributes to pathogenesis during invasive aspergillosis. In macrophages and neutrophils, gliotoxin showed inhibition of various different cell functions including cytokine production, antigen presentation, phagocytosis, and production of reactive oxygen species. This chain is Nonribosomal peptide synthetase gliP, found in Aspergillus fumigatus (strain ATCC MYA-4609 / CBS 101355 / FGSC A1100 / Af293) (Neosartorya fumigata).